The following is a 210-amino-acid chain: Redox-sensing transcriptional repressor Rex (210 aa).

A DNA-binding region (H-T-H motif) is located at residues 17-56 (KYHRYLNELMKNDVDRISSKELGEKIGFTASQIRQDLNCF). Residue 91–96 (GAGNIG) participates in NAD(+) binding.

This sequence belongs to the transcriptional regulatory Rex family. In terms of assembly, homodimer.

It is found in the cytoplasm. In terms of biological role, modulates transcription in response to changes in cellular NADH/NAD(+) redox state. This chain is Redox-sensing transcriptional repressor Rex, found in Clostridium botulinum (strain Alaska E43 / Type E3).